The chain runs to 509 residues: Zinc finger protein CKR1 (509 aa).

The KRAB domain occupies 1 to 61 (MEPYVLLDPR…GSEEPQTHPP (61 aa)). Basic and acidic residues-rich tracts occupy residues 41-50 (EDAVGLKEDA) and 98-112 (PKRD…RDRP). Residues 41–114 (EDAVGLKEDA…PSRVRDRPFG (74 aa)) form a disordered region. 11 C2H2-type zinc fingers span residues 113–135 (FGCP…RRVH), 141–163 (YSCP…RRTH), 169–191 (HKCQ…SRGH), 197–219 (HRCG…RRVH), 225–247 (YECP…RRSH), 279–303 (QRCA…ERSH), 303–325 (HRCG…RRVH), 331–353 (FPCG…GKTH), 359–383 (YKCG…GHAA), 387–409 (FTCG…RRVH), and 415–437 (YECP…RRSH). Residues 428–479 (SHLTKHRRSHGPKAPLLPVQGRGEAGEPLRASPLSSGAEQRDGRRAQRGGVE) form a disordered region.

This sequence belongs to the krueppel C2H2-type zinc-finger protein family.

It localises to the nucleus. This Gallus gallus (Chicken) protein is Zinc finger protein CKR1.